The primary structure comprises 370 residues: Cytochrome b (370 aa).

Helical transmembrane passes span 25 to 45, 69 to 90, 105 to 125, and 170 to 190; these read FGSM…FLAV, WLMQ…YIHI, WLSG…GYVL, and FFAL…LHVI. His-75 and His-89 together coordinate heme b. Residues His-174 and His-188 each coordinate heme b. A ubiquinone is bound at residue His-193. The next 4 helical transmembrane spans lie at 218–238, 280–300, 312–332, and 339–358; these read YKDL…VSFS, LGGA…PFTH, FMQM…WTAT, and FTLI…ISNP.

Belongs to the cytochrome b family. As to quaternary structure, the cytochrome bc1 complex contains 3 respiratory subunits (MT-CYB, CYC1 and UQCRFS1), 2 core proteins (UQCRC1 and UQCRC2) and probably 6 low-molecular weight proteins. Requires heme b as cofactor.

The protein localises to the mitochondrion inner membrane. Its function is as follows. Component of the ubiquinol-cytochrome c reductase complex (complex III or cytochrome b-c1 complex) that is part of the mitochondrial respiratory chain. The b-c1 complex mediates electron transfer from ubiquinol to cytochrome c. Contributes to the generation of a proton gradient across the mitochondrial membrane that is then used for ATP synthesis. This chain is Cytochrome b (MT-CYB), found in Eunectes murinus (Green anaconda).